Here is a 101-residue protein sequence, read N- to C-terminus: Large ribosomal subunit protein uL24 (101 aa).

It belongs to the universal ribosomal protein uL24 family. In terms of assembly, part of the 50S ribosomal subunit.

Functionally, one of two assembly initiator proteins, it binds directly to the 5'-end of the 23S rRNA, where it nucleates assembly of the 50S subunit. In terms of biological role, one of the proteins that surrounds the polypeptide exit tunnel on the outside of the subunit. The sequence is that of Large ribosomal subunit protein uL24 from Cereibacter sphaeroides (strain ATCC 17025 / ATH 2.4.3) (Rhodobacter sphaeroides).